Here is a 228-residue protein sequence, read N- to C-terminus: Lipoprotein-releasing system ATP-binding protein LolD 2 (228 aa).

An ABC transporter domain is found at 9–228 (RGLERVYKTE…KDGHLELQRV (220 aa)). 42-49 (GPSGSGKS) provides a ligand contact to ATP.

The protein belongs to the ABC transporter superfamily. Lipoprotein translocase (TC 3.A.1.125) family. As to quaternary structure, the complex is composed of two ATP-binding proteins (LolD) and two transmembrane proteins (LolC and LolE).

The protein resides in the cell inner membrane. Functionally, part of the ABC transporter complex LolCDE involved in the translocation of mature outer membrane-directed lipoproteins, from the inner membrane to the periplasmic chaperone, LolA. Responsible for the formation of the LolA-lipoprotein complex in an ATP-dependent manner. The polypeptide is Lipoprotein-releasing system ATP-binding protein LolD 2 (Caulobacter vibrioides (strain ATCC 19089 / CIP 103742 / CB 15) (Caulobacter crescentus)).